A 208-amino-acid polypeptide reads, in one-letter code: MNQIPQHKSLVIGLTGGIASGKSAAAAKFVELDIPCIDADQVARDVVEPGEPALQHIAEHFGSALITPNGVLDRAALRKLVFNDPEQKKWLESLLHPLINQRIRDWLGACKTPYCILASPLLLETRQRELVDRILVIDVPESVQIARAMARDQNSEDLVRRIIATQSGREYKRQHADDIILNDKDLAHLYHEVAKLHEYYLELAQHDR.

Residues 11–207 form the DPCK domain; it reads VIGLTGGIAS…EYYLELAQHD (197 aa). Residue 19-24 coordinates ATP; sequence ASGKSA.

The protein belongs to the CoaE family.

The protein localises to the cytoplasm. The catalysed reaction is 3'-dephospho-CoA + ATP = ADP + CoA + H(+). It participates in cofactor biosynthesis; coenzyme A biosynthesis; CoA from (R)-pantothenate: step 5/5. Its function is as follows. Catalyzes the phosphorylation of the 3'-hydroxyl group of dephosphocoenzyme A to form coenzyme A. The sequence is that of Dephospho-CoA kinase from Hahella chejuensis (strain KCTC 2396).